The following is a 297-amino-acid chain: uncharacterized protein (297 aa).

A run of 6 helical transmembrane segments spans residues 26 to 48 (FVLH…IYAI), 80 to 102 (NIEL…AALF), 134 to 156 (LFKF…INLG), 185 to 205 (LGIF…AIVI), 225 to 247 (LVDT…VAAY), and 262 to 284 (LVAV…VELY).

Its subcellular location is the cell membrane. This is an uncharacterized protein from Archaeoglobus fulgidus (strain ATCC 49558 / DSM 4304 / JCM 9628 / NBRC 100126 / VC-16).